The primary structure comprises 131 residues: Profilin-3 (131 aa).

This sequence belongs to the profilin family. In terms of assembly, occurs in many kinds of cells as a complex with monomeric actin in a 1:1 ratio.

It localises to the cytoplasm. Its subcellular location is the cytoskeleton. Functionally, binds to actin and affects the structure of the cytoskeleton. At high concentrations, profilin prevents the polymerization of actin, whereas it enhances it at low concentrations. By binding to PIP2, it inhibits the formation of IP3 and DG. The chain is Profilin-3 from Malus domestica (Apple).